The primary structure comprises 214 residues: Thiamine-phosphate synthase (214 aa).

4-amino-2-methyl-5-(diphosphooxymethyl)pyrimidine contacts are provided by residues 37–41 (QLRDK) and Asn69. Residues Asp70 and Asp89 each coordinate Mg(2+). Residue Ser108 coordinates 4-amino-2-methyl-5-(diphosphooxymethyl)pyrimidine. 134 to 136 (TDS) provides a ligand contact to 2-[(2R,5Z)-2-carboxy-4-methylthiazol-5(2H)-ylidene]ethyl phosphate. Lys137 lines the 4-amino-2-methyl-5-(diphosphooxymethyl)pyrimidine pocket. Residues Gly167 and 187–188 (IS) each bind 2-[(2R,5Z)-2-carboxy-4-methylthiazol-5(2H)-ylidene]ethyl phosphate.

This sequence belongs to the thiamine-phosphate synthase family. Mg(2+) serves as cofactor.

The catalysed reaction is 2-[(2R,5Z)-2-carboxy-4-methylthiazol-5(2H)-ylidene]ethyl phosphate + 4-amino-2-methyl-5-(diphosphooxymethyl)pyrimidine + 2 H(+) = thiamine phosphate + CO2 + diphosphate. It carries out the reaction 2-(2-carboxy-4-methylthiazol-5-yl)ethyl phosphate + 4-amino-2-methyl-5-(diphosphooxymethyl)pyrimidine + 2 H(+) = thiamine phosphate + CO2 + diphosphate. The enzyme catalyses 4-methyl-5-(2-phosphooxyethyl)-thiazole + 4-amino-2-methyl-5-(diphosphooxymethyl)pyrimidine + H(+) = thiamine phosphate + diphosphate. Its pathway is cofactor biosynthesis; thiamine diphosphate biosynthesis; thiamine phosphate from 4-amino-2-methyl-5-diphosphomethylpyrimidine and 4-methyl-5-(2-phosphoethyl)-thiazole: step 1/1. Condenses 4-methyl-5-(beta-hydroxyethyl)thiazole monophosphate (THZ-P) and 2-methyl-4-amino-5-hydroxymethyl pyrimidine pyrophosphate (HMP-PP) to form thiamine monophosphate (TMP). The sequence is that of Thiamine-phosphate synthase from Natronomonas pharaonis (strain ATCC 35678 / DSM 2160 / CIP 103997 / JCM 8858 / NBRC 14720 / NCIMB 2260 / Gabara) (Halobacterium pharaonis).